Reading from the N-terminus, the 183-residue chain is uncharacterized protein (183 aa).

Residues 54–89 (DAASQSDPLPGGDGLTGGDSKATRRTSPRYYPPSEA) are disordered.

This is an uncharacterized protein from Human cytomegalovirus (strain AD169) (HHV-5).